The chain runs to 205 residues: Glycerol-3-phosphate acyltransferase (205 aa).

6 helical membrane passes run 5-25 (LALG…GYLA), 54-74 (GPAA…VWLA), 87-107 (IVLG…WLAF), 117-137 (VGLL…VWGV), 138-158 (CFAV…ATPL), and 162-182 (LWRA…YIVW).

This sequence belongs to the PlsY family. In terms of assembly, probably interacts with PlsX.

It is found in the cell inner membrane. The catalysed reaction is an acyl phosphate + sn-glycerol 3-phosphate = a 1-acyl-sn-glycero-3-phosphate + phosphate. Its pathway is lipid metabolism; phospholipid metabolism. Functionally, catalyzes the transfer of an acyl group from acyl-phosphate (acyl-PO(4)) to glycerol-3-phosphate (G3P) to form lysophosphatidic acid (LPA). This enzyme utilizes acyl-phosphate as fatty acyl donor, but not acyl-CoA or acyl-ACP. This chain is Glycerol-3-phosphate acyltransferase, found in Gloeobacter violaceus (strain ATCC 29082 / PCC 7421).